Here is a 251-residue protein sequence, read N- to C-terminus: Small ribosomal subunit protein uS2 (251 aa).

This sequence belongs to the universal ribosomal protein uS2 family.

The sequence is that of Small ribosomal subunit protein uS2 from Novosphingobium aromaticivorans (strain ATCC 700278 / DSM 12444 / CCUG 56034 / CIP 105152 / NBRC 16084 / F199).